The following is a 214-amino-acid chain: uncharacterized protein (214 aa).

The chain crosses the membrane as a helical span at residues 9–31 (FLYFAISVLVNLLFLKILYIYLF). Residues 53 to 74 (APPKKPGKPQKKVVKKKPEAVS) are disordered. Positions 54–67 (PPKKPGKPQKKVVK) are enriched in basic residues.

It localises to the membrane. This is an uncharacterized protein from Aquifex aeolicus (strain VF5).